The following is a 308-amino-acid chain: Carbonic anhydrase 4 (308 aa).

The N-terminal stretch at 1 to 18 (MQLLFALLALGALRPLAG) is a signal peptide. Residues 21–281 (LHWCYEIQAS…LGDRSVFKSQ (261 aa)) enclose the Alpha-carbonic anhydrase domain. Disulfide bonds link cysteine 24-cysteine 34 and cysteine 44-cysteine 225. An N-linked (GlcNAc...) asparagine glycan is attached at asparagine 31. Catalysis depends on histidine 86, which acts as the Proton donor/acceptor. Zn(2+) contacts are provided by histidine 113, histidine 115, and histidine 138. The N-linked (GlcNAc...) asparagine glycan is linked to asparagine 192. 221 to 222 (TT) contacts substrate. Residue serine 280 is the site of GPI-anchor amidated serine attachment. A propeptide spans 281–308 (QAAGQLLPLPLPTLLVPTLACVMAGLLR) (removed in mature form).

Belongs to the alpha-carbonic anhydrase family. Interacts with SLC4A4. It depends on Zn(2+) as a cofactor.

The protein localises to the cell membrane. The enzyme catalyses hydrogencarbonate + H(+) = CO2 + H2O. With respect to regulation, inhibited by acetazolamide. Its function is as follows. Catalyzes the reversible hydration of carbon dioxide into bicarbonate and protons and thus is essential to maintaining intracellular and extracellular pH. May stimulate the sodium/bicarbonate transporter activity of SLC4A4 that acts in pH homeostasis. It is essential for acid overload removal from the retina and retina epithelium, and acid release in the choriocapillaris in the choroid. The chain is Carbonic anhydrase 4 (CA4) from Oryctolagus cuniculus (Rabbit).